We begin with the raw amino-acid sequence, 182 residues long: MPRYLCDYCQVWLTHDSQSVRKAHNAGRAHIQNVQDYYTKVAQEEAQKQLEERASSGFLKKGNGSLDLPYAYAFPPKYNVFNLGCPPPPYIVSANTYMAPKGMNAMNAAAFVPMMPAVNLTNQVAFSAPQTTASSNTQLTQQQQSLPQTNEHQRARTHSNANNHFTKTHHQGQRSHQRFVRA.

Residues 4–36 form a Matrin-type zinc finger; the sequence is YLCDYCQVWLTHDSQSVRKAHNAGRAHIQNVQD. Residues 129-182 form a disordered region; the sequence is PQTTASSNTQLTQQQQSLPQTNEHQRARTHSNANNHFTKTHHQGQRSHQRFVRA. Positions 130–150 are enriched in low complexity; sequence QTTASSNTQLTQQQQSLPQTN. The segment covering 166–182 has biased composition (basic residues); it reads TKTHHQGQRSHQRFVRA.

The protein belongs to the U1 small nuclear ribonucleoprotein C family. In terms of assembly, U1 snRNP is composed of the 7 core Sm proteins smb1, smd1, smd2, smd3, sme1, smf1 and smg1 (Sm proteins B, D1, D2, D3, E, F and G, respectively) that assemble in a heptameric protein ring on the Sm site of the small nuclear RNA to form the core snRNP, and at least 9 U1 snRNP-specific proteins usp101/U1-70K, usp102/U1-A, usp103/U1-C, usp106/LUC7, usp105/PRP39, usp104/PRP40, usp107/U1-H, usp108/U1-J and usp109/U1-L. usp103/U1-C interacts with U1 snRNA and the 5' splice-site region of the pre-mRNA.

It is found in the nucleus. Functionally, component of the spliceosomal U1 snRNP, which is essential for recognition of the pre-mRNA 5' splice-site and the subsequent assembly of the spliceosome. usp103/U1-C is directly involved in initial 5' splice-site recognition for both constitutive and regulated alternative splicing. The interaction with the 5' splice-site seems to precede base-pairing between the pre-mRNA and the U1 snRNA. Stimulates commitment or early (E) complex formation by stabilizing the base pairing of the 5' end of the U1 snRNA and the 5' splice-site region. The polypeptide is U1 small nuclear ribonucleoprotein C (usp103) (Schizosaccharomyces pombe (strain 972 / ATCC 24843) (Fission yeast)).